Reading from the N-terminus, the 476-residue chain is Sulfate adenylyltransferase subunit 1 (476 aa).

Residues 25–241 form the tr-type G domain; it reads KSLLRFLTCG…LETVEVQRVV (217 aa). The interval 34–41 is G1; that stretch reads GSVDDGKS. 34–41 contacts GTP; it reads GSVDDGKS. A G2 region spans residues 92-96; sequence GITID. Positions 113–116 are G3; the sequence is DTPG. Residues 113-117 and 168-171 each bind GTP; these read DTPGH and NKMD. Residues 168–171 form a G4 region; the sequence is NKMD. The segment at 206–208 is G5; sequence SAL.

This sequence belongs to the TRAFAC class translation factor GTPase superfamily. Classic translation factor GTPase family. CysN/NodQ subfamily. As to quaternary structure, heterodimer composed of CysD, the smaller subunit, and CysN.

The catalysed reaction is sulfate + ATP + H(+) = adenosine 5'-phosphosulfate + diphosphate. The protein operates within sulfur metabolism; hydrogen sulfide biosynthesis; sulfite from sulfate: step 1/3. Functionally, with CysD forms the ATP sulfurylase (ATPS) that catalyzes the adenylation of sulfate producing adenosine 5'-phosphosulfate (APS) and diphosphate, the first enzymatic step in sulfur assimilation pathway. APS synthesis involves the formation of a high-energy phosphoric-sulfuric acid anhydride bond driven by GTP hydrolysis by CysN coupled to ATP hydrolysis by CysD. This is Sulfate adenylyltransferase subunit 1 from Erwinia tasmaniensis (strain DSM 17950 / CFBP 7177 / CIP 109463 / NCPPB 4357 / Et1/99).